A 323-amino-acid chain; its full sequence is Serine racemase (323 aa).

ATP contacts are provided by Ser32, Ser33, and Lys52. The active-site Proton acceptor is the Lys57. Lys57 bears the Lysino-D-alanine (Lys); alternate mark. Lys57 bears the N6-(pyridoxal phosphate)lysine; alternate mark. Thr79 contributes to the Ca(2+) binding site. Ser82 serves as the catalytic Proton acceptor. Asn84 provides a ligand contact to pyridoxal 5'-phosphate. Residues Gln87 and Tyr119 each coordinate ATP. Asp176 lines the Mg(2+) pocket. Positions 183, 184, 185, 186, and 187 each coordinate pyridoxal 5'-phosphate. Ca(2+)-binding residues include Glu208, Gly212, and Asp214. Glu208, Gly212, and Asp214 together coordinate Mg(2+). Mn(2+) is bound by residues Glu208, Gly212, and Asp214. Lys277 is a binding site for ATP. Ser308 lines the pyridoxal 5'-phosphate pocket. An ATP-binding site is contributed by Asn311.

The protein belongs to the serine/threonine dehydratase family. As to quaternary structure, homodimer. Requires Mg(2+) as cofactor. It depends on Mn(2+) as a cofactor. Ca(2+) serves as cofactor. Pyridoxal 5'-phosphate is required as a cofactor. Post-translationally, modification of the active site Lys by its substrate Ser to lysino-D-alanine reduces but does not abolish enzyme activity.

It catalyses the reaction L-serine = D-serine. The catalysed reaction is L-serine = pyruvate + NH4(+). The enzyme catalyses D-serine = pyruvate + NH4(+). Its activity is regulated as follows. Allosterically activated by ATP, by magnesium, and possibly also by other divalent metal cations. In terms of biological role, catalyzes the synthesis of D-serine from L-serine. Has dehydratase activity towards both L-serine and D-serine. The protein is Serine racemase of Schizosaccharomyces pombe (strain 972 / ATCC 24843) (Fission yeast).